The primary structure comprises 1469 residues: MLVTYNGHVDDNSINNQIIENNVQTDDLNNSFDNHKDQIELKSYKETENIETENIETENKEVETINNEIIKISQEIEISKSQEIDKTNNNINEQNNDNFEIPEKELQEIEACPCNKNIIINDSNNYNVTIIQNDDSIVIENCTDCGDHITPKEEEEKEKEKEKEKEKEKEKEKEKEKDSEESLQEQCLNKENESIDNDNNNNIINNNNNDSIIIIKESTDDKKEIPSIECIQNNQNNQNNNDSPINKEIEDDNNNNIEKDGADIHIKEEQVEKVQVEEKEVEEIQVKDNANSVTSTIVTATDVTTTTTTTTTTTSSSNNCTNSISNTDKSTTTNCPPVENGGDSDGKLMYPLYKKVFGNKTISKLIFKNIRKIQRFKSITIESPSSPLPLSDIHGYGQVKSYSNITFEYMVFNWMIDLLHDKIVKNNEDLNFNNNNNNNNNNNNNNNNNSQPYHYQLKGSQSHEILLKNLKPNDENSKQLLKSFFKKYCDRNSILKKLTEYNNPLLTKLVLKDYLNDFKPVKNNNNNNNNNNNNNNNNNNNNNNNNNNNNNNNNNINNNSYFYKSVPNELLFNLILQQGEIKLVKQVLNGKYKELKLNQMSIHYALKSTLKNEIIQYIINNNRKELSQLYLKSNKCIVGSRRLFLSIFVPPPTTTTTTTNTNSTNTNSTINATSPPHTPKLSSSPLLTTTTTPPASPTQSRIPLVRTLTQLPSRIPLVRTQTQLQTKIQPKSPQPQPTAAPEPQKPPTPSIVKNQMHSQINITPQTKDYIEIGEMIGFEFRIFLELFEVTFPNVPKFRITESCVDSLKELVLKRSIENQNNKSIYSFDVLFDIFRITLHLVLIGCLKLIGDHENNNYNNNNNYNNNINNINYNNNINNNSYNNINNNNYNNNNKTTTTTTTTTTTTTANSNKSKTNKNKNNNNNNNNNNNNNNNNNNNNNNNNNNNNNNNNNEKNIINNDNNINNNEIDISKDKKDLVKFRAIFNQINNLRQTYLFKKKNQEFEIEIKKLFFLDFIPLFGFNEKLLFEKSCLKIDLLHEEKKYGWIIGQEEQPNTLFIKEQLIKSSYEKLDANLFGLSVFLFGIERFSSGSQWFSYPNKIVNNKITNGPYNGNLDKQIQFLEGMIENCKTYKLFDRNETIGIIEAILNSIVITIQNNNDNNNNNNNNNNNNNNNNNNNNNNNNNYNIISIFEKKIQKLLGNCPIKVGAHSLFHSLELIEFCFNNCRDLINFSCCDSMNTLYRDSKFLSIIEFYHRNNLFFGNCSMEIGKSRKRSIAEKIYSFGYRFSNNLIPLAVYNDRESGYLFYYAVEKFIIEKLFNGDGSDYDESNCSSSSSSSESNGIDSGSESGRGRCRSNTTNNSNNINNSSNNNQRFQLHFLLSGNSIPRVIKRNEIFLPTNSKLKWFNLLLSSCGELFTYFPSNEGLCSDFDTPKTNFNLNYEEFYILKFITPFLYKKFKNSFSIKKDFYH.

The segment covering 146–180 (GDHITPKEEEEKEKEKEKEKEKEKEKEKEKEKDSE) has biased composition (basic and acidic residues). 9 disordered regions span residues 146–186 (GDHI…LQEQ), 231–255 (IQNNQNNQNNNDSPINKEIEDDNNN), 306–344 (TTTTTTTTTSSSNNCTNSISNTDKSTTTNCPPVENGGDS), 430–455 (LNFNNNNNNNNNNNNNNNNNSQPYHY), 520–560 (PVKN…NNNS), 654–706 (TTTT…PLVR), 719–755 (RTQTQLQTKIQPKSPQPQPTAAPEPQKPPTPSIVKNQ), 881–958 (YNNI…NIIN), and 1329–1369 (NCSS…NSSN). Composition is skewed to low complexity over residues 232 to 241 (QNNQNNQNNN), 306 to 327 (TTTTTTTTTSSSNNCTNSISNT), 430 to 449 (LNFNNNNNNNNNNNNNNNNN), 523 to 559 (NNNNNNNNNNNNNNNNNNNNNNNNNNNNNNNNNINNN), and 654 to 693 (TTTTTTNTNSTNTNSTINATSPPHTPKLSSSPLLTTTTTP). Residues 719–731 (RTQTQLQTKIQPK) show a composition bias toward polar residues. The span at 732 to 749 (SPQPQPTAAPEPQKPPTP) shows a compositional bias: pro residues. 2 stretches are compositionally biased toward low complexity: residues 1329–1347 (NCSSSSSSSESNGIDSGSE) and 1354–1369 (RSNTTNNSNNINNSSN).

This is an uncharacterized protein from Dictyostelium discoideum (Social amoeba).